The following is a 482-amino-acid chain: Cobyrinate a,c-diamide synthase (482 aa).

The GATase cobBQ-type domain occupies 248-441 (RLAIAQDQAF…LHLHWGSQIS (194 aa)). Cys331 acts as the Nucleophile in catalysis.

This sequence belongs to the CobB/CbiA family. It depends on Mg(2+) as a cofactor.

It carries out the reaction cob(II)yrinate + 2 L-glutamine + 2 ATP + 2 H2O = cob(II)yrinate a,c diamide + 2 L-glutamate + 2 ADP + 2 phosphate + 2 H(+). It participates in cofactor biosynthesis; adenosylcobalamin biosynthesis; cob(II)yrinate a,c-diamide from sirohydrochlorin (anaerobic route): step 10/10. Its function is as follows. Catalyzes the ATP-dependent amidation of the two carboxylate groups at positions a and c of cobyrinate, using either L-glutamine or ammonia as the nitrogen source. This Synechocystis sp. (strain ATCC 27184 / PCC 6803 / Kazusa) protein is Cobyrinate a,c-diamide synthase.